We begin with the raw amino-acid sequence, 204 residues long: ATP phosphoribosyltransferase (204 aa).

The protein belongs to the ATP phosphoribosyltransferase family. Short subfamily. As to quaternary structure, heteromultimer composed of HisG and HisZ subunits.

It is found in the cytoplasm. It catalyses the reaction 1-(5-phospho-beta-D-ribosyl)-ATP + diphosphate = 5-phospho-alpha-D-ribose 1-diphosphate + ATP. It participates in amino-acid biosynthesis; L-histidine biosynthesis; L-histidine from 5-phospho-alpha-D-ribose 1-diphosphate: step 1/9. Catalyzes the condensation of ATP and 5-phosphoribose 1-diphosphate to form N'-(5'-phosphoribosyl)-ATP (PR-ATP). Has a crucial role in the pathway because the rate of histidine biosynthesis seems to be controlled primarily by regulation of HisG enzymatic activity. The protein is ATP phosphoribosyltransferase of Staphylococcus epidermidis (strain ATCC 35984 / DSM 28319 / BCRC 17069 / CCUG 31568 / BM 3577 / RP62A).